Reading from the N-terminus, the 396-residue chain is Purine ribonucleoside efflux pump NepI (396 aa).

Over 1–21 (MSEFIAENRGADAITRPNWSA) the chain is Cytoplasmic. A helical transmembrane segment spans residues 22–42 (VFSVAFCVACLIIVEFLPVSL). At 43–54 (LTPMAQDLGISE) the chain is on the periplasmic side. The helical transmembrane segment at 55-75 (GVAGQSVTVTAFVAMFASLFI) threads the bilayer. Residues 76-85 (TQTIQATDRC) lie on the Cytoplasmic side of the membrane. The helical transmembrane segment at 86–106 (YVVILFAVLLTLSCLLVSFAN) threads the bilayer. Ser107 is a topological domain (periplasmic). The helical transmembrane segment at 108-128 (FSLLLIGRACLGLALGGFWAM) threads the bilayer. Residues 129-147 (SASLTMRLVPPRTVPKALS) lie on the Cytoplasmic side of the membrane. Residues 148-168 (VIFGAVSIALVIAAPLGSFLG) form a helical membrane-spanning segment. The Periplasmic segment spans residues 169–175 (ELIGWRN). Residues 176 to 196 (VFNAAAVMGVLCIFWIIKSLP) form a helical membrane-spanning segment. Residues 197-215 (SLPGEPSHQKQNTFRLLQR) lie on the Cytoplasmic side of the membrane. The chain crosses the membrane as a helical span at residues 216–236 (PGVMAGMIAIFMSFAGQFAFF). Topologically, residues 237–255 (TYIRPVYMNLAGFGVDGLT) are periplasmic. Residues 256 to 276 (LVLLSFGIASFIGTSLSSFIL) traverse the membrane as a helical segment. At 277–281 (KRSVK) the chain is on the cytoplasmic side. A helical membrane pass occupies residues 282 to 302 (LALAGAPLILAVSALVLTLWG). Residues 303–305 (SDK) lie on the Periplasmic side of the membrane. A helical transmembrane segment spans residues 306–326 (IVATGVAIIWGLTFALVPVGW). Residues 327–343 (STWITRSLADQAEKAGS) are Cytoplasmic-facing. A helical transmembrane segment spans residues 344 to 364 (IQVAVIQLANTCGAAIGGYAL). Topologically, residues 365 to 366 (DN) are periplasmic. The helical transmembrane segment at 367 to 387 (IGLTSPLMLSGTLMLLTALLV) threads the bilayer. Over 388 to 396 (TAKVKMKKS) the chain is Cytoplasmic.

This sequence belongs to the major facilitator superfamily. DHA1 family. NepI (TC 2.A.1.2.26) subfamily.

It is found in the cell inner membrane. It carries out the reaction inosine(in) + H(+)(out) = inosine(out) + H(+)(in). The catalysed reaction is guanosine(in) + H(+)(out) = guanosine(out) + H(+)(in). Its function is as follows. Involved in the efflux of purine ribonucleosides, such as inosine and guanosine. In Shigella boydii serotype 4 (strain Sb227), this protein is Purine ribonucleoside efflux pump NepI.